Here is a 685-residue protein sequence, read N- to C-terminus: Protein SPT2 homolog (685 aa).

The important for interaction with DNA stretch occupies residues 1–570 (MDFREILMIA…PPLSGYRAAQ (570 aa)). K37 is covalently cross-linked (Glycyl lysine isopeptide (Lys-Gly) (interchain with G-Cter in SUMO2)). Positions 45–81 (QAFLKRKEEELRRKALEEKRRKEELVKKRIELKHDKK) form a coiled coil. The disordered stretch occupies residues 79–168 (DKKARAMAKR…PLKSAPPPMN (90 aa)). Residues 101 to 111 (IEEKSKKRQAT) are compositionally biased toward basic and acidic residues. Residues 123–148 (YEMEEENEFLEYNHAESEQEYEEEQE) are a coiled coil. Residue K187 forms a Glycyl lysine isopeptide (Lys-Gly) (interchain with G-Cter in SUMO2) linkage. 2 stretches are compositionally biased toward basic and acidic residues: residues 188–209 (VVKK…EFLE) and 260–275 (HAEK…EKHL). Disordered stretches follow at residues 188–615 (VVKK…QEEI) and 644–685 (SWKE…LKRR). S278 is modified (phosphoserine). Composition is skewed to low complexity over residues 317-330 (SSTS…TSAS), 365-385 (SPGV…PSTG), and 402-415 (GSSS…ISGS). A compositionally biased stretch (polar residues) spans 416 to 431 (KKPTNDSNPSRRTVSG). Low complexity predominate over residues 435–501 (PGQPASSSGG…PGRSISGSIP (67 aa)). Phosphoserine is present on S471. Residues 519-529 (GPGQTVSSSGP) are compositionally biased toward polar residues. The span at 542–553 (ISSKNIISRSSN) shows a compositional bias: low complexity. Residues 571 to 685 (GPQRLPFPTG…RRRAKKLKRR (115 aa)) are important for interaction with histones. K582 carries the N6-acetyllysine modification. Residues 587 to 613 (YEEEDDDDDEYDSEMEDFIEDEGEPQE) show a composition bias toward acidic residues. S599 is subject to Phosphoserine. Composition is skewed to basic and acidic residues over residues 644–655 (SWKEQQKEEAKS) and 666–676 (EMRREEEEMQR). The stretch at 645 to 685 (WKEQQKEEAKSLRLGMQEDLEEMRREEEEMQRRRAKKLKRR) forms a coiled coil.

It belongs to the SPT2 family. As to quaternary structure, interacts with histones. Interacts with a heterotetrameric complex formed by histone H3 and H4, especially when the histone tetramer is not bound to DNA. Interacts with histone H3.3.

It localises to the nucleus. Its subcellular location is the nucleolus. In terms of biological role, histone chaperone that stabilizes pre-existing histone tetramers and regulates replication-independent histone exchange on chromatin. Required for normal chromatin refolding in the coding region of transcribed genes, and for the suppression of spurious transcription. Binds DNA and histones and promotes nucleosome assembly (in vitro). Facilitates formation of tetrameric histone complexes containing histone H3 and H4. Modulates RNA polymerase 1-mediated transcription. Binds DNA, with a preference for branched DNA species, such as Y-form DNA and Holliday junction DNA. This is Protein SPT2 homolog (SPTY2D1) from Homo sapiens (Human).